We begin with the raw amino-acid sequence, 247 residues long: ATP synthase subunit C lysine N-methyltransferase (247 aa).

N-acetylmethionine is present on methionine 1. The segment covering 1-12 (MERVGTPEEERQ) has biased composition (basic and acidic residues). The interval 1-25 (MERVGTPEEERQAGPVLPTSLESDS) is disordered. The helical transmembrane segment at 34 to 54 (LITGVVGGALLTVYAVATPFI) threads the bilayer. Positions 51 to 85 (TPFITPALRKVCLPFVPATSKQVENVVRMLRHRRG) are required for mitochondrial location. A disordered region spans residues 209 to 247 (QRGRGGRPNQEWVGQKNLSETAGLQASSSETRSKLLDVE). Residues 224–238 (KNLSETAGLQASSSE) show a composition bias toward polar residues.

The protein belongs to the ANT/ATPSC lysine N-methyltransferase family. As to expression, ubiquitously expressed.

Its subcellular location is the mitochondrion membrane. The enzyme catalyses L-lysyl-[protein] + 3 S-adenosyl-L-methionine = N(6),N(6),N(6)-trimethyl-L-lysyl-[protein] + 3 S-adenosyl-L-homocysteine + 3 H(+). In terms of biological role, mitochondrial protein-lysine N-methyltransferase that trimethylates ATP synthase subunit C, ATP5MC1 and ATP5MC2. Trimethylation is required for proper incorporation of the C subunit into the ATP synthase complex and mitochondrial respiration. Promotes chronic pain. Involved in persistent inflammatory and neuropathic pain: methyltransferase activity in the mitochondria of sensory neurons promotes chronic pain via a pathway that depends on the production of reactive oxygen species (ROS) and on the engagement of spinal cord microglia. The polypeptide is ATP synthase subunit C lysine N-methyltransferase (Mus musculus (Mouse)).